Here is a 331-residue protein sequence, read N- to C-terminus: MDTEMDGVNNDGYTSLYKETAKGNIKKVVELLYKGVNPNTPNVDSYTPLHIAAKTGNIKIIRRLIRYGANVDKETNDGYTALLIAICTGDIKTCNVLLDEGANPNYVNKYGITPLVRIISYYRPTILKLLMDRGANCNQIINIGQVTYTIMEYFINLFDEYKIPILNLVPYIIISKFKASITVNIEGFNRNIAAIAKNSRLLEVALKCKSEIAFMTTRGIGDKSLFEICILEDIKDIDHNSFVAFLDKLIESQSNLRIYGYTMNKIIEMGRYRKELLCSAVRVNSCNLSSLNTEWCLLPLKGKLNILSKLNNDNIKKLILNDAIKVNNKTG.

4 ANK repeats span residues 11–40 (DGYT…NPNT), 44–73 (DSYT…NVDK), 77–106 (DGYT…NPNY), and 110–139 (YGIT…NCNQ).

This is Putative ankyrin repeat protein FPV012 from Vertebrata (FPV).